Consider the following 513-residue polypeptide: RNA-binding protein FUS (513 aa).

Residues 1–14 (MASNDYTQQATQSY) are compositionally biased toward polar residues. Positions 1 to 273 (MASNDYTQQA…SEQDNSDNNT (273 aa)) are disordered. Low complexity-rich tracts occupy residues 20–36 (QPGQGYSQQSNQPYGQQ), 43–63 (QSTDTSGYGQSSYSGSYGQTQ), and 84–124 (SSQS…SGYG). Residues 125-139 (QPQGGGYGQQSGYGG) show a composition bias toward gly residues. Residues 140-164 (QQQSYGQQQSYNPPQGYGQQSQYNS) show a composition bias toward low complexity. Gly residues-rich tracts occupy residues 165 to 176 (SGGGGGGGGGSY) and 185 to 219 (SGGGGGGYGNQDQSGGYGGGQQDRGGRGRGGGGGY). 2 positions are modified to asymmetric dimethylarginine; alternate: Arg-211 and Arg-213. An omega-N-methylarginine; alternate mark is found at Arg-211 and Arg-213. Residues Arg-229, Arg-231, Arg-235, Arg-238, and Arg-246 each carry the asymmetric dimethylarginine modification. Positions 231–246 (RGGGRGGRGGMGGSDR) are enriched in gly residues. Ser-264 is modified (phosphoserine). Residues 272-358 (NTIFVQGLGE…NPIKVSFATR (87 aa)) form the RRM domain. Thr-273 bears the Phosphothreonine mark. Lys-321 is covalently cross-linked (Glycyl lysine isopeptide (Lys-Gly) (interchain with G-Cter in SUMO2)). Ser-327 is modified (phosphoserine). 2 disordered regions span residues 362 to 411 (FNRG…QRAG) and 431 to 513 (CNQC…ERPY). Asymmetric dimethylarginine is present on residues Arg-364, Arg-370, Arg-373, Arg-375, and Arg-381. The segment covering 364 to 408 (RGGGNGRGGRGRGGPMGRGGYGGGGSGGGGRGGFPSGGGGGGGQQ) has biased composition (gly residues). Arg-394 bears the Asymmetric dimethylarginine; alternate mark. The residue at position 394 (Arg-394) is an Omega-N-methylarginine; alternate. The segment at 409–440 (RAGDWKCPNPTCENMNFSWRNECNQCKAPKPD) adopts a RanBP2-type zinc-finger fold. A compositionally biased stretch (gly residues) spans 441 to 455 (GPGGGPGGSHMGGNY). Basic and acidic residues predominate over residues 456–480 (GDDRRGGRGGYDRGGYRGRGGDRGG). 8 positions are modified to asymmetric dimethylarginine: Arg-460, Arg-463, Arg-468, Arg-472, Arg-474, Arg-478, Arg-482, and Arg-485. A compositionally biased stretch (gly residues) spans 481–495 (FRGGRGGGDRGGFGP). Position 490 is an asymmetric dimethylarginine; alternate (Arg-490). At Arg-490 the chain carries Omega-N-methylarginine; alternate. Positions 498–513 (MDSRGEHRQDRRERPY) are enriched in basic and acidic residues.

Belongs to the RRM TET family. Self-oligomerizes (via N-terminal region). Oligomerization is essential for chromatin binding. Component of nuclear riboprotein complexes. Interacts with ILF3, TDRD3 and SF1. Interacts through its C-terminus with SFRS13A. Interacts with OTUB1 and SARNP. Interacts with LRSAM1. Interacts with SAFB1 in a DNA-dependent manner; this interaction tethers FUS to chromatin. Interacts with MATR3. Interacts with SNRNP70 and POLR2A; these interactions couple RNA transcription and splicing. Interacts (through its RNA-binding domain) with RALY (through its RNA-binding domain); both are components of the same RNPs. Phosphorylated in its N-terminal serine residues upon induced DNA damage. ATM and DNA-PK are able to phosphorylate FUS N-terminal region.

It is found in the nucleus. Functionally, DNA/RNA-binding protein that plays a role in various cellular processes such as transcription regulation, RNA splicing, RNA transport, DNA repair and damage response. Binds to ssRNA containing the consensus sequence 5'-AGGUAA-3'. Binds to nascent pre-mRNAs and acts as a molecular mediator between RNA polymerase II and U1 small nuclear ribonucleoprotein thereby coupling transcription and splicing. Also binds its own pre-mRNA and autoregulates its expression; this autoregulation mechanism is mediated by non-sense-mediated decay. Plays a role in DNA repair mechanisms by promoting D-loop formation and homologous recombination during DNA double-strand break repair. In neuronal cells, plays crucial roles in dendritic spine formation and stability, RNA transport, mRNA stability and synaptic homeostasis. This is RNA-binding protein FUS (FUS) from Bos taurus (Bovine).